The following is a 209-amino-acid chain: Probable glutathione peroxidase 8 (209 aa).

At M1 the chain carries N-acetylmethionine. The helical transmembrane segment at I18–L40 threads the bilayer. C79 is an active-site residue.

The protein belongs to the glutathione peroxidase family.

It is found in the membrane. The enzyme catalyses 2 glutathione + H2O2 = glutathione disulfide + 2 H2O. This chain is Probable glutathione peroxidase 8 (Gpx8), found in Mus musculus (Mouse).